A 226-amino-acid chain; its full sequence is PKHD-type hydroxylase mma_3618 (226 aa).

The region spanning 78–178 (RYMPPLFNRY…RISSFFWVQS (101 aa)) is the Fe2OG dioxygenase domain. Histidine 96, aspartate 98, and histidine 159 together coordinate Fe cation. 2-oxoglutarate is bound at residue arginine 169.

The cofactor is Fe(2+). L-ascorbate is required as a cofactor.

The protein is PKHD-type hydroxylase mma_3618 of Janthinobacterium sp. (strain Marseille) (Minibacterium massiliensis).